Here is a 138-residue protein sequence, read N- to C-terminus: Small ribosomal subunit protein uS11 (138 aa).

Disordered stretches follow at residues Met1–Ala29 and Gly117–Val138. Over residues Lys13–Lys22 the composition is skewed to basic residues.

This sequence belongs to the universal ribosomal protein uS11 family. In terms of assembly, part of the 30S ribosomal subunit. Interacts with proteins S7 and S18. Binds to IF-3.

Located on the platform of the 30S subunit, it bridges several disparate RNA helices of the 16S rRNA. Forms part of the Shine-Dalgarno cleft in the 70S ribosome. The chain is Small ribosomal subunit protein uS11 from Mycobacterium ulcerans (strain Agy99).